Consider the following 72-residue polypeptide: MKADIHPKYAEVNVTCSCGHVFTTRSTLGKPELHVEVCAACHPFYTGKQKIVDTAGRVERFRQKYGNVQRLG.

Zn(2+) contacts are provided by cysteine 16, cysteine 18, cysteine 38, and cysteine 41.

The protein belongs to the bacterial ribosomal protein bL31 family. Type A subfamily. As to quaternary structure, part of the 50S ribosomal subunit. Requires Zn(2+) as cofactor.

Functionally, binds the 23S rRNA. The protein is Large ribosomal subunit protein bL31 of Azoarcus sp. (strain BH72).